A 749-amino-acid polypeptide reads, in one-letter code: Cytosolic phospholipase A2 (749 aa).

The segment at 1 to 178 is phospholipid binding; the sequence is MSFIDPYQHI…MKKLLGPKKS (178 aa). Serine 2 carries the phosphoserine modification. In terms of domain architecture, C2 spans 6–122; the sequence is PYQHIIVEHQ…KVGEKKEVPF (117 aa). The Ca(2+) site is built by aspartate 40, threonine 41, aspartate 43, asparagine 65, aspartate 93, alanine 94, and asparagine 95. The PLA2c domain maps to 140 to 740; it reads SCPDLRFSMA…SNVEARRFFN (601 aa). The Nucleophile role is filled by serine 228. Residue threonine 268 is modified to Phosphothreonine. The segment at 427–456 is disordered; sequence KHIVSNDSSDSDDESQEPKGTENEDAERDY. 3 positions are modified to phosphoserine: serine 434, serine 435, and serine 437. Serine 505 carries the phosphoserine; by MAPK modification. Serine 515 carries the phosphoserine modification. Lysine 541 is covalently cross-linked (Glycyl lysine isopeptide (Lys-Gly) (interchain with G-Cter in SUMO2)). The Proton acceptor role is filled by aspartate 549. Residue lysine 606 forms a Glycyl lysine isopeptide (Lys-Gly) (interchain with G-Cter in SUMO2) linkage. Phosphoserine is present on residues serine 727 and serine 729.

Interacts with KAT5. Phosphorylated at both Ser-505 and Ser-727 in response to mitogenic stimuli.

It localises to the cytoplasm. The protein localises to the golgi apparatus membrane. The protein resides in the nucleus envelope. The catalysed reaction is a 1,2-diacyl-sn-glycero-3-phosphocholine + H2O = a 1-acyl-sn-glycero-3-phosphocholine + a fatty acid + H(+). It carries out the reaction a 1-O-alkyl-2-acyl-sn-glycero-3-phosphocholine + H2O = a 1-O-alkyl-sn-glycero-3-phosphocholine + a fatty acid + H(+). It catalyses the reaction a 1-acyl-sn-glycero-3-phosphocholine + H2O = sn-glycerol 3-phosphocholine + a fatty acid + H(+). The enzyme catalyses 1-hexadecanoyl-2-(5Z,8Z,11Z,14Z-eicosatetraenoyl)-sn-glycero-3-phosphocholine + H2O = 1-hexadecanoyl-sn-glycero-3-phosphocholine + (5Z,8Z,11Z,14Z)-eicosatetraenoate + H(+). The catalysed reaction is 1,2-di-(5Z,8Z,11Z,14Z-eicosatetraenoyl)-sn-glycero-3-phosphocholine + H2O = 1-(5Z,8Z,11Z,14Z-eicosatetraenoyl)-sn-glycero-3-phosphocholine + (5Z,8Z,11Z,14Z)-eicosatetraenoate + H(+). It carries out the reaction 1-octadecanoyl-2-(5Z,8Z,11Z,14Z-eicosatetraenoyl)-sn-glycero-3-phosphocholine + H2O = 1-octadecanoyl-sn-glycero-3-phosphocholine + (5Z,8Z,11Z,14Z)-eicosatetraenoate + H(+). It catalyses the reaction 1-hexadecanoyl-2-(9Z,12Z-octadecadienoyl)-sn-glycero-3-phosphocholine + H2O = (9Z,12Z)-octadecadienoate + 1-hexadecanoyl-sn-glycero-3-phosphocholine + H(+). The enzyme catalyses 1-octadecanoyl-2-(9Z,12Z,15Z-octadecatrienoyl)-sn-glycero-3-phosphocholine + H2O = (9Z,12Z,15Z)-octadecatrienoate + 1-octadecanoyl-sn-glycero-3-phosphocholine + H(+). The catalysed reaction is 1-(5Z,8Z,11Z,14Z-eicosatetraenoyl)-2-hexadecanoyl-sn-glycero-3-phosphocholine + H2O = 1-(5Z,8Z,11Z,14Z-eicosatetraenoyl)-sn-glycero-3-phosphocholine + hexadecanoate + H(+). It carries out the reaction 1-O-hexadecyl-2-(5Z,8Z,11Z,14Z)-eicosatetraenoyl-sn-glycero-3-phosphocholine + H2O = 1-O-hexadecyl-sn-glycero-3-phosphocholine + (5Z,8Z,11Z,14Z)-eicosatetraenoate + H(+). It catalyses the reaction 1,2-di-(9Z-octadecenoyl)-sn-glycero-3-phospho-(1'-sn-glycerol) + H2O = 1-(9Z-octadecenoyl)-sn-glycero-3-phospho-(1'-sn-glycerol) + (9Z)-octadecenoate + H(+). The enzyme catalyses 1-octadecanoyl-2-(5Z,8Z,11Z,14Z-eicosatetraenoyl)-sn-glycero-3-phosphate + H2O = 1-octadecanoyl-sn-glycero-3-phosphate + (5Z,8Z,11Z,14Z)-eicosatetraenoate + H(+). The catalysed reaction is 1-hexadecanoyl-sn-glycero-3-phosphocholine + H2O = sn-glycerol 3-phosphocholine + hexadecanoate + H(+). It carries out the reaction 2-(prostaglandin E2)-sn-glycero-3-phosphoethanolamine + H2O = sn-glycero-3-phosphoethanolamine + prostaglandin E2 + H(+). It catalyses the reaction 2-[(15S)-hydroxy-(5Z,8Z,11Z,13E)-eicosatetraenoyl]-sn-glycero-3-phosphocholine + H2O = (15S)-hydroxy-(5Z,8Z,11Z,13E)-eicosatetraenoate + sn-glycerol 3-phosphocholine + H(+). The enzyme catalyses 2-[(15R)-hydroxy-(5Z,8Z,11Z,13E)-eicosatetraenoyl]-sn-glycero-3-phosphocholine + H2O = (15R)-hydroxy-(5Z,8Z,11Z,13E)-eicosatetraenoate + sn-glycerol 3-phosphocholine + H(+). The catalysed reaction is 2-(prostaglandin E2)-sn-glycero-3-phosphocholine + H2O = prostaglandin E2 + sn-glycerol 3-phosphocholine + H(+). It carries out the reaction 2-[(11R)-hydroxy-(5Z,8Z,12E,14Z)-eicosatetraenoyl]-sn-glycero-3-phosphocholine + H2O = (11R)-hydroxy-(5Z,8Z,12E,14Z)-eicosatetraenoate + sn-glycerol 3-phosphocholine + H(+). It catalyses the reaction 1-(5Z,8Z,11Z,14Z-eicosatetraenoyl)-2-O-hexadecyl-sn-glycero-3-phosphocholine + H2O = 2-O-hexadecyl-sn-glycero-3-phosphocholine + (5Z,8Z,11Z,14Z)-eicosatetraenoate + H(+). The enzyme catalyses 1-octadecanoyl-2-(5Z,8Z,11Z,14Z-eicosatetraenoyl)-sn-glycero-3-phosphocholine + glycerol = 1-(5Z,8Z,11Z,14Z-eicosatetraenoyl)-glycerol + 1-octadecanoyl-sn-glycero-3-phosphocholine. The catalysed reaction is 1-octadecanoyl-2-(9Z,12Z,15Z-octadecatrienoyl)-sn-glycero-3-phosphocholine + glycerol = 1-(9Z,12Z,15Z-octadecatrienoyl)-glycerol + 1-octadecanoyl-sn-glycero-3-phosphocholine. It participates in membrane lipid metabolism; glycerophospholipid metabolism. It functions in the pathway lipid metabolism; arachidonate metabolism. Its pathway is lipid metabolism; prostaglandin biosynthesis. The protein operates within lipid metabolism; leukotriene B4 biosynthesis. Its activity is regulated as follows. Activated by cytosolic calcium, which is necessary for binding to membrane lipids. Activated by phosphorylation in response to mitogenic stimuli. In terms of biological role, has primarily calcium-dependent phospholipase and lysophospholipase activities, with a major role in membrane lipid remodeling and biosynthesis of lipid mediators of the inflammatory response. Plays an important role in embryo implantation and parturition through its ability to trigger prostanoid production. Preferentially hydrolyzes the ester bond of the fatty acyl group attached at sn-2 position of phospholipids (phospholipase A2 activity). Selectively hydrolyzes sn-2 arachidonoyl group from membrane phospholipids, providing the precursor for eicosanoid biosynthesis via the cyclooxygenase pathway. In an alternative pathway of eicosanoid biosynthesis, hydrolyzes sn-2 fatty acyl chain of eicosanoid lysophopholipids to release free bioactive eicosanoids. Hydrolyzes the ester bond of the fatty acyl group attached at sn-1 position of phospholipids (phospholipase A1 activity) only if an ether linkage rather than an ester linkage is present at the sn-2 position. This hydrolysis is not stereospecific. Has calcium-independent phospholipase A2 and lysophospholipase activities in the presence of phosphoinositides. Has O-acyltransferase activity. Catalyzes the transfer of fatty acyl chains from phospholipids to a primary hydroxyl group of glycerol (sn-1 or sn-3), potentially contributing to monoacylglycerol synthesis. The protein is Cytosolic phospholipase A2 (PLA2G4A) of Equus caballus (Horse).